Here is a 446-residue protein sequence, read N- to C-terminus: tRNA-2-methylthio-N(6)-dimethylallyladenosine synthase (446 aa).

In terms of domain architecture, MTTase N-terminal spans lysine 2–glutamate 122. Residues cysteine 11, cysteine 47, cysteine 85, cysteine 157, cysteine 161, and cysteine 164 each coordinate [4Fe-4S] cluster. In terms of domain architecture, Radical SAM core spans arginine 143–alanine 375. The TRAM domain maps to alanine 378–glutamate 440.

It belongs to the methylthiotransferase family. MiaB subfamily. Monomer. The cofactor is [4Fe-4S] cluster.

The protein resides in the cytoplasm. The enzyme catalyses N(6)-dimethylallyladenosine(37) in tRNA + (sulfur carrier)-SH + AH2 + 2 S-adenosyl-L-methionine = 2-methylsulfanyl-N(6)-dimethylallyladenosine(37) in tRNA + (sulfur carrier)-H + 5'-deoxyadenosine + L-methionine + A + S-adenosyl-L-homocysteine + 2 H(+). Functionally, catalyzes the methylthiolation of N6-(dimethylallyl)adenosine (i(6)A), leading to the formation of 2-methylthio-N6-(dimethylallyl)adenosine (ms(2)i(6)A) at position 37 in tRNAs that read codons beginning with uridine. The chain is tRNA-2-methylthio-N(6)-dimethylallyladenosine synthase from Methylorubrum extorquens (strain CM4 / NCIMB 13688) (Methylobacterium extorquens).